A 459-amino-acid chain; its full sequence is Ribulose bisphosphate carboxylase large chain (459 aa).

Residue K4 is modified to N6,N6,N6-trimethyllysine. 2 residues coordinate substrate: N113 and T163. The Proton acceptor role is filled by K165. K167 is a binding site for substrate. Residues K191, D193, and E194 each contribute to the Mg(2+) site. K191 is modified (N6-carboxylysine). The Proton acceptor role is filled by H284. 3 residues coordinate substrate: R285, H317, and S369.

It belongs to the RuBisCO large chain family. Type I subfamily. In terms of assembly, heterohexadecamer of 8 large chains and 8 small chains; disulfide-linked. The disulfide link is formed within the large subunit homodimers. Mg(2+) serves as cofactor. Post-translationally, the disulfide bond which can form in the large chain dimeric partners within the hexadecamer appears to be associated with oxidative stress and protein turnover.

The protein localises to the plastid. It is found in the chloroplast. It carries out the reaction 2 (2R)-3-phosphoglycerate + 2 H(+) = D-ribulose 1,5-bisphosphate + CO2 + H2O. It catalyses the reaction D-ribulose 1,5-bisphosphate + O2 = 2-phosphoglycolate + (2R)-3-phosphoglycerate + 2 H(+). RuBisCO catalyzes two reactions: the carboxylation of D-ribulose 1,5-bisphosphate, the primary event in carbon dioxide fixation, as well as the oxidative fragmentation of the pentose substrate in the photorespiration process. Both reactions occur simultaneously and in competition at the same active site. The protein is Ribulose bisphosphate carboxylase large chain of Garrya elliptica (Wavyleaf silktassel).